Here is a 204-residue protein sequence, read N- to C-terminus: Recombination protein RecR (204 aa).

The segment at 58-75 adopts a C4-type zinc-finger fold; it reads CSICQNITDLGTDPCLLC. Positions 83–181 constitute a Toprim domain; that stretch reads SVICVVESPT…NVTRIARGIP (99 aa).

The protein belongs to the RecR family.

In terms of biological role, may play a role in DNA repair. It seems to be involved in an RecBC-independent recombinational process of DNA repair. It may act with RecF and RecO. The sequence is that of Recombination protein RecR from Chlorobaculum parvum (strain DSM 263 / NCIMB 8327) (Chlorobium vibrioforme subsp. thiosulfatophilum).